The following is a 163-amino-acid chain: MGITKKPDLNDPVLRAKLAKGMGHNYYGEPAWPNDLLYIFPVVILGTIACNVGLAVLEPSMIGEPADPFATPLEILPEWYFFPVFQILRTVPNKLLGVLLMVSVPTGLLTVPFLENVNKFQNPFRRPVATTVFLIGTAVALWLGIGATLPIDKSLTLGLFQID.

3 helical membrane-spanning segments follow: residues 36–56, 95–115, and 131–151; these read LLYI…GLAV, LLGV…PFLE, and TVFL…TLPI.

Belongs to the cytochrome b family. PetD subfamily. In terms of assembly, the 4 large subunits of the cytochrome b6-f complex are cytochrome b6, subunit IV (17 kDa polypeptide, petD), cytochrome f and the Rieske protein, while the 4 small subunits are petG, petL, petM and petN. The complex functions as a dimer.

The protein localises to the plastid. The protein resides in the chloroplast thylakoid membrane. Its function is as follows. Component of the cytochrome b6-f complex, which mediates electron transfer between photosystem II (PSII) and photosystem I (PSI), cyclic electron flow around PSI, and state transitions. The protein is Cytochrome b6-f complex subunit 4 of Drimys granadensis.